We begin with the raw amino-acid sequence, 215 residues long: Ribose-5-phosphate isomerase A (215 aa).

Residues 26–29, 79–82, and 92–95 contribute to the substrate site; these read TGST, DGAD, and KGGG. The active-site Proton acceptor is the Glu-101. Lys-119 serves as a coordination point for substrate.

It belongs to the ribose 5-phosphate isomerase family. In terms of assembly, homodimer.

It catalyses the reaction aldehydo-D-ribose 5-phosphate = D-ribulose 5-phosphate. It participates in carbohydrate degradation; pentose phosphate pathway; D-ribose 5-phosphate from D-ribulose 5-phosphate (non-oxidative stage): step 1/1. Functionally, catalyzes the reversible conversion of ribose-5-phosphate to ribulose 5-phosphate. This Xylella fastidiosa (strain 9a5c) protein is Ribose-5-phosphate isomerase A.